The following is a 313-amino-acid chain: Small ribosomal subunit protein uS2 (313 aa).

Basic and acidic residues predominate over residues 233 to 256 (RTMTDKQSDVAKEAKADGKEEAPK). Residues 233 to 293 (RTMTDKQSDV…SRKLVAAGTA (61 aa)) form a disordered region.

It belongs to the universal ribosomal protein uS2 family.

The polypeptide is Small ribosomal subunit protein uS2 (Bdellovibrio bacteriovorus (strain ATCC 15356 / DSM 50701 / NCIMB 9529 / HD100)).